Reading from the N-terminus, the 308-residue chain is uncharacterized protein (308 aa).

The S4 RNA-binding domain maps to 15–81 (MRVDTGLARL…QNTPIDIEGM (67 aa)). Asp139 is a catalytic residue.

This sequence belongs to the pseudouridine synthase RluA family.

It catalyses the reaction a uridine in RNA = a pseudouridine in RNA. This is an uncharacterized protein from Mycobacterium tuberculosis (strain CDC 1551 / Oshkosh).